A 111-amino-acid polypeptide reads, in one-letter code: Resistin-like gamma (111 aa).

The first 23 residues, 1–23 (MKTAICSLLICIFLLQLMVPVNT), serve as a signal peptide directing secretion. 5 disulfides stabilise this stretch: cysteine 55–cysteine 108, cysteine 67–cysteine 107, cysteine 76–cysteine 93, cysteine 78–cysteine 95, and cysteine 82–cysteine 97.

This sequence belongs to the resistin/FIZZ family. In terms of assembly, homodimer. Heterodimer with RETNLB. As to expression, highly expressed in bone marrow, spleen and white blood cells. Also detected at low levels in thymus, lung, trachea, white adipose tissue, nasal respiratory epithelium, colon, small intestine, kidney, liver, and heart.

It is found in the secreted. Its function is as follows. Probable hormone. Promotes chemotaxis in myeloid cells. This is Resistin-like gamma from Rattus norvegicus (Rat).